The chain runs to 263 residues: Type II restriction enzyme TthHB8I (263 aa).

The enzyme catalyses Endonucleolytic cleavage of DNA to give specific double-stranded fragments with terminal 5'-phosphates.. In terms of biological role, a P subtype restriction enzyme that recognizes the double-stranded sequence 5'-TCGA-3' and cleaves after T-1. The chain is Type II restriction enzyme TthHB8I (tthHB8IR) from Thermus thermophilus (strain ATCC 27634 / DSM 579 / HB8).